Consider the following 1548-residue polypeptide: UDP-glucose:glycoprotein glucosyltransferase (1548 aa).

The N-terminal stretch at 1–22 is a signal peptide; the sequence is MLRAVALCVSVVLIALYTPTSG. Asn-181 is a glycosylation site (N-linked (GlcNAc...) asparagine). Residues 243–253 show a composition bias toward basic and acidic residues; sequence TEYKSQDDAPK. Positions 243–265 are disordered; it reads TEYKSQDDAPKPEAGSTSDEDLA. N-linked (GlcNAc...) asparagine glycans are attached at residues Asn-266 and Asn-864. Positions 1227 to 1548 are glucosyltransferase; that stretch reads SANQAATDED…PSHEPKHGEL (322 aa). Residues 1512–1523 show a composition bias toward basic and acidic residues; it reads EDHENSHSRDSA. The interval 1512 to 1548 is disordered; sequence EDHENSHSRDSAVDDSVDDSVEVTTVTPSHEPKHGEL. A Prevents secretion from ER motif is present at residues 1545-1548; that stretch reads HGEL.

It belongs to the glycosyltransferase 8 family. As to quaternary structure, monomer. May interact with CG7484/Sep15. Requires Ca(2+) as cofactor. It depends on Mn(2+) as a cofactor.

It localises to the endoplasmic reticulum lumen. The protein localises to the endoplasmic reticulum-Golgi intermediate compartment. The enzyme catalyses N(4)-(alpha-D-Man-(1-&gt;2)-alpha-D-Man-(1-&gt;2)-alpha-D-Man-(1-&gt;3)-[alpha-D-Man-(1-&gt;2)-alpha-D-Man-(1-&gt;3)-[alpha-D-Man-(1-&gt;2)-alpha-D-Man-(1-&gt;6)]-alpha-D-Man-(1-&gt;6)]-beta-D-Man-(1-&gt;4)-beta-D-GlcNAc-(1-&gt;4)-beta-D-GlcNAc)-L-asparaginyl-[protein] (N-glucan mannose isomer 9A1,2,3B1,2,3) + UDP-alpha-D-glucose = N(4)-(alpha-D-Glc-(1-&gt;3)-alpha-D-Man-(1-&gt;2)-alpha-D-Man-(1-&gt;2)-alpha-D-Man-(1-&gt;3)-[alpha-D-Man-(1-&gt;2)-alpha-D-Man-(1-&gt;3)-[alpha-D-Man-(1-&gt;2)-alpha-D-Man-(1-&gt;6)]-alpha-D-Man-(1-&gt;6)]-beta-D-Man-(1-&gt;4)-beta-D-GlcNAc-(1-&gt;4)-beta-D-GlcNAc)-L-asparaginyl-[protein] + UDP + H(+). It functions in the pathway protein modification; protein glycosylation. Recognizes glycoproteins with minor folding defects. Reglucosylates single N-glycans near the misfolded part of the protein, thus providing quality control for protein folding in the endoplasmic reticulum. Reglucosylated proteins are recognized by calreticulin for recycling to the endoplasmic reticulum and refolding or degradation. This Drosophila melanogaster (Fruit fly) protein is UDP-glucose:glycoprotein glucosyltransferase.